The chain runs to 315 residues: Calumenin-A (315 aa).

The N-terminal stretch at 1–19 is a signal peptide; that stretch reads MEIRPLLMCFALCVVYATS. 6 EF-hand domains span residues 68-103, 104-139, 151-186, 188-223, 229-264, and 265-300; these read ESKR…AQKK, YIYE…TYLD, HMMA…EEYD, MKDI…HEDE, WVAT…SDYD, and HAEA…FVGS. Ca(2+)-binding residues include aspartate 81, aspartate 83, aspartate 85, glutamate 92, aspartate 117, asparagine 119, aspartate 121, methionine 123, and glutamate 128. N-linked (GlcNAc...) asparagine glycosylation is present at asparagine 131. The Ca(2+) site is built by aspartate 164, asparagine 166, aspartate 168, glutamate 175, aspartate 201, asparagine 203, aspartate 205, glutamate 212, aspartate 242, asparagine 244, aspartate 246, lysine 248, glutamate 253, aspartate 278, asparagine 280, aspartate 282, lysine 284, and glutamate 289. Positions 312–315 match the Prevents secretion from ER motif; the sequence is HDEF.

This sequence belongs to the CREC family. In terms of assembly, interacts with ggcx.

It localises to the endoplasmic reticulum membrane. The protein localises to the golgi apparatus. It is found in the secreted. Its subcellular location is the melanosome. The protein resides in the sarcoplasmic reticulum lumen. In terms of biological role, involved in regulation of vitamin K-dependent carboxylation of multiple N-terminal glutamate residues. Seems to inhibit gamma-carboxylase ggcx. Binds 7 calcium ions with a low affinity. The protein is Calumenin-A (calua) of Salmo salar (Atlantic salmon).